A 381-amino-acid chain; its full sequence is L-lactate dehydrogenase (381 aa).

The 380-residue stretch at 1–380 folds into the FMN hydroxy acid dehydrogenase domain; sequence MIISSASDYR…KPEALVDLSK (380 aa). Tyr24 is a substrate binding site. Ser106 and Gln127 together coordinate FMN. Tyr129 contributes to the substrate binding site. FMN is bound at residue Thr155. Arg164 contributes to the substrate binding site. Lys251 contributes to the FMN binding site. His275 serves as the catalytic Proton acceptor. Residue Arg278 participates in substrate binding. 306 to 330 provides a ligand contact to FMN; it reads DSGIRNGLDIVRMLALGADATMLGR.

This sequence belongs to the FMN-dependent alpha-hydroxy acid dehydrogenase family. FMN is required as a cofactor.

It localises to the cell inner membrane. The enzyme catalyses (S)-lactate + A = pyruvate + AH2. Functionally, catalyzes the conversion of L-lactate to pyruvate. Is coupled to the respiratory chain. This Haemophilus influenzae (strain 86-028NP) protein is L-lactate dehydrogenase.